The primary structure comprises 882 residues: Alanine--tRNA ligase (882 aa).

Histidine 570, histidine 574, cysteine 672, and histidine 676 together coordinate Zn(2+).

The protein belongs to the class-II aminoacyl-tRNA synthetase family. It depends on Zn(2+) as a cofactor.

The protein localises to the cytoplasm. The catalysed reaction is tRNA(Ala) + L-alanine + ATP = L-alanyl-tRNA(Ala) + AMP + diphosphate. In terms of biological role, catalyzes the attachment of alanine to tRNA(Ala) in a two-step reaction: alanine is first activated by ATP to form Ala-AMP and then transferred to the acceptor end of tRNA(Ala). Also edits incorrectly charged Ser-tRNA(Ala) and Gly-tRNA(Ala) via its editing domain. This chain is Alanine--tRNA ligase, found in Xanthomonas campestris pv. campestris (strain ATCC 33913 / DSM 3586 / NCPPB 528 / LMG 568 / P 25).